Consider the following 451-residue polypeptide: 3-phosphoshikimate 1-carboxyvinyltransferase (451 aa).

3-phosphoshikimate is bound by residues Lys-28, Ser-29, and Arg-33. Position 28 (Lys-28) interacts with phosphoenolpyruvate. The phosphoenolpyruvate site is built by Gly-105 and Arg-133. 3-phosphoshikimate-binding residues include Ser-178, Gln-180, Asp-331, and Lys-358. Gln-180 contributes to the phosphoenolpyruvate binding site. Asp-331 (proton acceptor) is an active-site residue. Positions 362 and 406 each coordinate phosphoenolpyruvate.

This sequence belongs to the EPSP synthase family. In terms of assembly, monomer.

The protein localises to the cytoplasm. The enzyme catalyses 3-phosphoshikimate + phosphoenolpyruvate = 5-O-(1-carboxyvinyl)-3-phosphoshikimate + phosphate. Its pathway is metabolic intermediate biosynthesis; chorismate biosynthesis; chorismate from D-erythrose 4-phosphate and phosphoenolpyruvate: step 6/7. Functionally, catalyzes the transfer of the enolpyruvyl moiety of phosphoenolpyruvate (PEP) to the 5-hydroxyl of shikimate-3-phosphate (S3P) to produce enolpyruvyl shikimate-3-phosphate and inorganic phosphate. This chain is 3-phosphoshikimate 1-carboxyvinyltransferase, found in Rhodospirillum rubrum (strain ATCC 11170 / ATH 1.1.1 / DSM 467 / LMG 4362 / NCIMB 8255 / S1).